The chain runs to 197 residues: Nucleoside triphosphate pyrophosphatase (197 aa).

The Proton acceptor role is filled by Asp-72.

The protein belongs to the Maf family. Requires a divalent metal cation as cofactor.

Its subcellular location is the cytoplasm. The enzyme catalyses a ribonucleoside 5'-triphosphate + H2O = a ribonucleoside 5'-phosphate + diphosphate + H(+). It carries out the reaction a 2'-deoxyribonucleoside 5'-triphosphate + H2O = a 2'-deoxyribonucleoside 5'-phosphate + diphosphate + H(+). Nucleoside triphosphate pyrophosphatase. May have a dual role in cell division arrest and in preventing the incorporation of modified nucleotides into cellular nucleic acids. This chain is Nucleoside triphosphate pyrophosphatase, found in Corynebacterium efficiens (strain DSM 44549 / YS-314 / AJ 12310 / JCM 11189 / NBRC 100395).